The primary structure comprises 1408 residues: DNA-directed RNA polymerase subunit beta'' (1408 aa).

It belongs to the RNA polymerase beta' chain family. RpoC2 subfamily. In terms of assembly, in plastids the minimal PEP RNA polymerase catalytic core is composed of four subunits: alpha, beta, beta', and beta''. When a (nuclear-encoded) sigma factor is associated with the core the holoenzyme is formed, which can initiate transcription.

Its subcellular location is the plastid. The protein resides in the chloroplast. It carries out the reaction RNA(n) + a ribonucleoside 5'-triphosphate = RNA(n+1) + diphosphate. Functionally, DNA-dependent RNA polymerase catalyzes the transcription of DNA into RNA using the four ribonucleoside triphosphates as substrates. This chain is DNA-directed RNA polymerase subunit beta'', found in Psilotum nudum (Whisk fern).